We begin with the raw amino-acid sequence, 286 residues long: Pantothenate synthetase (286 aa).

ATP is bound at residue 31–38 (MGALHDGH). The active-site Proton donor is H38. Q62 is a (R)-pantoate binding site. Q62 lines the beta-alanine pocket. An ATP-binding site is contributed by 148-151 (GKKD). Q154 contacts (R)-pantoate. ATP contacts are provided by residues V177 and 185-188 (KSSR).

It belongs to the pantothenate synthetase family. As to quaternary structure, homodimer.

It localises to the cytoplasm. The enzyme catalyses (R)-pantoate + beta-alanine + ATP = (R)-pantothenate + AMP + diphosphate + H(+). It functions in the pathway cofactor biosynthesis; (R)-pantothenate biosynthesis; (R)-pantothenate from (R)-pantoate and beta-alanine: step 1/1. In terms of biological role, catalyzes the condensation of pantoate with beta-alanine in an ATP-dependent reaction via a pantoyl-adenylate intermediate. In Staphylococcus epidermidis (strain ATCC 35984 / DSM 28319 / BCRC 17069 / CCUG 31568 / BM 3577 / RP62A), this protein is Pantothenate synthetase.